The primary structure comprises 544 residues: Chaperonin GroEL (544 aa).

ATP contacts are provided by residues 29-32 (TLGP), Lys-50, 86-90 (DGTTT), Gly-414, and Asp-495.

It belongs to the chaperonin (HSP60) family. As to quaternary structure, forms a cylinder of 14 subunits composed of two heptameric rings stacked back-to-back. Interacts with the co-chaperonin GroES.

The protein localises to the cytoplasm. It catalyses the reaction ATP + H2O + a folded polypeptide = ADP + phosphate + an unfolded polypeptide.. Together with its co-chaperonin GroES, plays an essential role in assisting protein folding. The GroEL-GroES system forms a nano-cage that allows encapsulation of the non-native substrate proteins and provides a physical environment optimized to promote and accelerate protein folding. In Treponema pallidum subsp. pallidum (strain SS14), this protein is Chaperonin GroEL.